The primary structure comprises 480 residues: Aspartyl/glutamyl-tRNA(Asn/Gln) amidotransferase subunit B (480 aa).

Belongs to the GatB/GatE family. GatB subfamily. In terms of assembly, heterotrimer of A, B and C subunits.

The enzyme catalyses L-glutamyl-tRNA(Gln) + L-glutamine + ATP + H2O = L-glutaminyl-tRNA(Gln) + L-glutamate + ADP + phosphate + H(+). It catalyses the reaction L-aspartyl-tRNA(Asn) + L-glutamine + ATP + H2O = L-asparaginyl-tRNA(Asn) + L-glutamate + ADP + phosphate + 2 H(+). Functionally, allows the formation of correctly charged Asn-tRNA(Asn) or Gln-tRNA(Gln) through the transamidation of misacylated Asp-tRNA(Asn) or Glu-tRNA(Gln) in organisms which lack either or both of asparaginyl-tRNA or glutaminyl-tRNA synthetases. The reaction takes place in the presence of glutamine and ATP through an activated phospho-Asp-tRNA(Asn) or phospho-Glu-tRNA(Gln). In Streptococcus pneumoniae (strain CGSP14), this protein is Aspartyl/glutamyl-tRNA(Asn/Gln) amidotransferase subunit B.